The primary structure comprises 130 residues: Holo-[acyl-carrier-protein] synthase (130 aa).

Positions 8 and 62 each coordinate Mg(2+).

This sequence belongs to the P-Pant transferase superfamily. AcpS family. The cofactor is Mg(2+).

Its subcellular location is the cytoplasm. The catalysed reaction is apo-[ACP] + CoA = holo-[ACP] + adenosine 3',5'-bisphosphate + H(+). In terms of biological role, transfers the 4'-phosphopantetheine moiety from coenzyme A to a Ser of acyl-carrier-protein. In Polynucleobacter asymbioticus (strain DSM 18221 / CIP 109841 / QLW-P1DMWA-1) (Polynucleobacter necessarius subsp. asymbioticus), this protein is Holo-[acyl-carrier-protein] synthase.